A 604-amino-acid polypeptide reads, in one-letter code: Glucose oxidase (604 aa).

The N-terminal stretch at 1 to 18 (MKSTIITSILFSVATVQA) is a signal peptide. Residues leucine 52, threonine 53, and glutamate 73 each contribute to the FAD site. N-linked (GlcNAc...) asparagine glycosylation is present at asparagine 111. FAD contacts are provided by serine 125, asparagine 129, glycine 130, and serine 132. A disulfide bridge links cysteine 186 with cysteine 228. N-linked (GlcNAc...) asparagine glycosylation occurs at asparagine 213. Residue valine 272 participates in FAD binding. 3 N-linked (GlcNAc...) asparagine glycosylation sites follow: asparagine 278, asparagine 409, and asparagine 531. The active-site Proton acceptor is the histidine 537. O2 contacts are provided by lysine 558 and valine 559. Glycine 570 and methionine 582 together coordinate FAD.

Belongs to the GMC oxidoreductase family. As to quaternary structure, homodimer. Requires FAD as cofactor.

It localises to the secreted. The protein localises to the cell wall. Its subcellular location is the cytoplasm. The protein resides in the extracellular space. It is found in the extracellular matrix. The enzyme catalyses beta-D-glucose + O2 = D-glucono-1,5-lactone + H2O2. Glucose oxidase catalyzes the oxidation of beta-D-glucose to D-glucono-delta-lactone and hydrogen peroxide in the presence of molecular oxygen. The enzyme also catalyzes the reaction with D-xylose but at a much lower rate. Shows any activities against D-fructose, D-galactose and D-arabinose. The enzyme is cytotoxic for a series of bacteria, yeasts and filamentous fungi and acts primarily via the liberation of H(2)O(2), which is a harmful oxidative stress-generating agent. In Penicillium chrysogenum (Penicillium notatum), this protein is Glucose oxidase.